Consider the following 267-residue polypeptide: Orotidine 5'-phosphate decarboxylase (267 aa).

Lys93 serves as the catalytic Proton donor.

The protein belongs to the OMP decarboxylase family. Type 2 subfamily.

It carries out the reaction orotidine 5'-phosphate + H(+) = UMP + CO2. The protein operates within pyrimidine metabolism; UMP biosynthesis via de novo pathway; UMP from orotate: step 2/2. This Halobacterium salinarum (strain ATCC 29341 / DSM 671 / R1) protein is Orotidine 5'-phosphate decarboxylase.